Consider the following 124-residue polypeptide: MRHYEIVFIVHPDQSEQVPAMIERYKTTITTHGGQIHRVEDWGRRQLAYMIEKLAKAHYVCMNIECDQTTLDELEHAFKFNDAVLRHLIVKMKKAETGPSPMMKEVQREEAKKAAAAQPAEAQA.

The tract at residues Glu96–Ala124 is disordered. Over residues Ala114–Ala124 the composition is skewed to low complexity.

This sequence belongs to the bacterial ribosomal protein bS6 family.

Functionally, binds together with bS18 to 16S ribosomal RNA. This is Small ribosomal subunit protein bS6 from Burkholderia orbicola (strain AU 1054).